Reading from the N-terminus, the 101-residue chain is Protein Tat (101 aa).

The interval 1–24 (MEPVDPSLDPWNHPGSQPTTPCTK) is interaction with human CREBBP. Residues 1–48 (MEPVDPSLDPWNHPGSQPTTPCTKCYCKRCCFHCQWCFTTKGLGISYG) form a transactivation region. 3 residues coordinate Zn(2+): C22, C25, and C27. The tract at residues 22 to 37 (CTKCYCKRCCFHCQWC) is cysteine-rich. Position 28 is an N6-acetyllysine; by host PCAF (K28). Residues C30, H33, C34, and C37 each contribute to the Zn(2+) site. The segment at 38 to 48 (FTTKGLGISYG) is core. A compositionally biased stretch (basic residues) spans 48–58 (GRKKRRQRHRT). A disordered region spans residues 48-101 (GRKKRRQRHRTPQSSQVHQNSLPKQPLSQARGDPTGPKESKKEVESKAKTDPCA). The Nuclear localization signal, RNA-binding (TAR), and protein transduction signature appears at 49-57 (RKKRRQRHR). The interaction with the host capping enzyme RNGTT stretch occupies residues 49–86 (RKKRRQRHRTPQSSQVHQNSLPKQPLSQARGDPTGPKE). K50 and K51 each carry N6-acetyllysine; by host EP300 and GCN5L2. Asymmetric dimethylarginine; by host PRMT6 occurs at positions 52 and 53. Polar residues predominate over residues 59–75 (PQSSQVHQNSLPKQPLS). Residue K71 forms a Glycyl lysine isopeptide (Lys-Gly) (interchain with G-Cter in ubiquitin) linkage. Positions 78–80 (RGD) match the Cell attachment site motif. A compositionally biased stretch (basic and acidic residues) spans 83–101 (GPKESKKEVESKAKTDPCA).

This sequence belongs to the lentiviruses Tat family. As to quaternary structure, interacts with host CCNT1. Associates with the P-TEFb complex composed at least of Tat, P-TEFb (CDK9 and CCNT1), TAR RNA, RNA Pol II. Recruits the HATs CREBBP, TAF1/TFIID, EP300, PCAF and GCN5L2. Interacts with host KAT5/Tip60; this interaction targets the latter to degradation. Interacts with the host deacetylase SIRT1. Interacts with host capping enzyme RNGTT; this interaction stimulates RNGTT. Binds to host KDR, and to the host integrins ITGAV/ITGB3 and ITGA5/ITGB1. Interacts with host KPNB1/importin beta-1 without previous binding to KPNA1/importin alpha-1. Interacts with EIF2AK2. Interacts with host nucleosome assembly protein NAP1L1; this interaction may be required for the transport of Tat within the nucleus, since the two proteins interact at the nuclear rim. Interacts with host C1QBP/SF2P32; this interaction involves lysine-acetylated Tat. Interacts with the host chemokine receptors CCR2, CCR3 and CXCR4. Interacts with host DPP4/CD26; this interaction may trigger an anti-proliferative effect. Interacts with host LDLR. Interacts with the host extracellular matrix metalloproteinase MMP1. Interacts with host PRMT6; this interaction mediates Tat's methylation. Interacts with, and is ubiquitinated by MDM2/Hdm2. Interacts with host PSMC3 and HTATIP2. Interacts with STAB1; this interaction may overcome SATB1-mediated repression of IL2 and IL2RA (interleukin) in T cells by binding to the same domain than HDAC1. Interacts (when acetylated) with human CDK13, thereby increasing HIV-1 mRNA splicing and promoting the production of the doubly spliced HIV-1 protein Nef. Interacts with host TBP; this interaction modulates the activity of transcriptional pre-initiation complex. Interacts with host RELA. Interacts with host PLSCR1; this interaction negatively regulates Tat transactivation activity by altering its subcellular distribution. Post-translationally, asymmetrical arginine methylation by host PRMT6 seems to diminish the transactivation capacity of Tat and affects the interaction with host CCNT1. Acetylation by EP300, CREBBP, GCN5L2/GCN5 and PCAF regulates the transactivation activity of Tat. EP300-mediated acetylation of Lys-50 promotes dissociation of Tat from the TAR RNA through the competitive binding to PCAF's bromodomain. In addition, the non-acetylated Tat's N-terminus can also interact with PCAF. PCAF-mediated acetylation of Lys-28 enhances Tat's binding to CCNT1. Lys-50 is deacetylated by SIRT1. In terms of processing, polyubiquitination by host MDM2 does not target Tat to degradation, but activates its transactivation function and fosters interaction with CCNT1 and TAR RNA. Post-translationally, phosphorylated by EIF2AK2 on serine and threonine residues adjacent to the basic region important for TAR RNA binding and function. Phosphorylation of Tat by EIF2AK2 is dependent on the prior activation of EIF2AK2 by dsRNA.

Its subcellular location is the host nucleus. The protein resides in the host nucleolus. It is found in the host cytoplasm. The protein localises to the secreted. Functionally, transcriptional activator that increases RNA Pol II processivity, thereby increasing the level of full-length viral transcripts. Recognizes a hairpin structure at the 5'-LTR of the nascent viral mRNAs referred to as the transactivation responsive RNA element (TAR) and recruits the cyclin T1-CDK9 complex (P-TEFb complex) that will in turn hyperphosphorylate the RNA polymerase II to allow efficient elongation. The CDK9 component of P-TEFb and other Tat-activated kinases hyperphosphorylate the C-terminus of RNA Pol II that becomes stabilized and much more processive. Other factors such as HTATSF1/Tat-SF1, SUPT5H/SPT5, and HTATIP2 are also important for Tat's function. Besides its effect on RNA Pol II processivity, Tat induces chromatin remodeling of proviral genes by recruiting the histone acetyltransferases (HATs) CREBBP, EP300 and PCAF to the chromatin. This also contributes to the increase in proviral transcription rate, especially when the provirus integrates in transcriptionally silent region of the host genome. To ensure maximal activation of the LTR, Tat mediates nuclear translocation of NF-kappa-B by interacting with host RELA. Through its interaction with host TBP, Tat may also modulate transcription initiation. Tat can reactivate a latently infected cell by penetrating in it and transactivating its LTR promoter. In the cytoplasm, Tat is thought to act as a translational activator of HIV-1 mRNAs. In terms of biological role, extracellular circulating Tat can be endocytosed by surrounding uninfected cells via the binding to several surface receptors such as CD26, CXCR4, heparan sulfate proteoglycans (HSPG) or LDLR. Neurons are rarely infected, but they internalize Tat via their LDLR. Through its interaction with nuclear HATs, Tat is potentially able to control the acetylation-dependent cellular gene expression. Modulates the expression of many cellular genes involved in cell survival, proliferation or in coding for cytokines or cytokine receptors. Tat plays a role in T-cell and neurons apoptosis. Tat induced neurotoxicity and apoptosis probably contribute to neuroAIDS. Circulating Tat also acts as a chemokine-like and/or growth factor-like molecule that binds to specific receptors on the surface of the cells, affecting many cellular pathways. In the vascular system, Tat binds to ITGAV/ITGB3 and ITGA5/ITGB1 integrins dimers at the surface of endothelial cells and competes with bFGF for heparin-binding sites, leading to an excess of soluble bFGF. The chain is Protein Tat from Human immunodeficiency virus type 1 group M subtype F1 (isolate VI850) (HIV-1).